Consider the following 289-residue polypeptide: Dehydrodolichyl diphosphate synthase 4 (289 aa).

Residues 2–22 (LSMLWFLLSLLSLLLLPCLRP) form a helical membrane-spanning segment.

The protein belongs to the UPP synthase family. Mg(2+) serves as cofactor.

The protein resides in the endoplasmic reticulum membrane. Its pathway is protein modification; protein glycosylation. Functionally, catalyzes cis-prenyl chain elongation to produce the polyprenyl backbone of dolichol, a glycosyl carrier-lipid required for the biosynthesis of several classes of glycoprotein. The sequence is that of Dehydrodolichyl diphosphate synthase 4 from Arabidopsis thaliana (Mouse-ear cress).